A 149-amino-acid polypeptide reads, in one-letter code: Calmodulin (149 aa).

Ala2 bears the N-acetylalanine mark. EF-hand domains are found at residues 8-43, 44-79, 81-116, and 117-149; these read EQIA…LGQN, PTEA…KMKD, DSEE…LGEK, and LTDE…MTAK. Ca(2+)-binding residues include Asp21, Asp23, Asp25, Thr27, Glu32, Asp57, Asp59, Asn61, Thr63, Glu68, Asp94, Asp96, Asn98, Tyr100, and Glu105. Lys116 carries the N6,N6,N6-trimethyllysine modification. The Ca(2+) site is built by Asp130, Asp132, Asp134, Gln136, and Glu141.

It belongs to the calmodulin family.

In terms of biological role, calmodulin acts as part of a calcium signal transduction pathway by mediating the control of a large number of enzymes, ion channels, aquaporins and other proteins through calcium-binding. Calcium-binding is required for the activation of calmodulin. Among the enzymes to be stimulated by the calmodulin-calcium complex are a number of protein kinases, such as myosin light-chain kinases and calmodulin-dependent protein kinase type II (CaMK2), and phosphatases. This Oreochromis mossambicus (Mozambique tilapia) protein is Calmodulin (calm).